Reading from the N-terminus, the 134-residue chain is uncharacterized protein (134 aa).

An N-terminal signal peptide occupies residues 1 to 26; that stretch reads MRLYKAMALCLPLVVICTSEVSQSTA. Residues 77–98 are disordered; it reads GEKNEEVAGPVDGEGSEEEAFD.

This is an uncharacterized protein from Encephalitozoon cuniculi (strain GB-M1) (Microsporidian parasite).